The sequence spans 229 residues: Urease accessory protein UreF (229 aa).

Belongs to the UreF family. UreD, UreF and UreG form a complex that acts as a GTP-hydrolysis-dependent molecular chaperone, activating the urease apoprotein by helping to assemble the nickel containing metallocenter of UreC. The UreE protein probably delivers the nickel.

The protein localises to the cytoplasm. Required for maturation of urease via the functional incorporation of the urease nickel metallocenter. The polypeptide is Urease accessory protein UreF (Staphylococcus saprophyticus subsp. saprophyticus (strain ATCC 15305 / DSM 20229 / NCIMB 8711 / NCTC 7292 / S-41)).